Consider the following 453-residue polypeptide: Homogentisate 1,2-dioxygenase (453 aa).

The tract at residues 1 to 42 (MLEKAEKQRRAGSGQQRAAGYMPGFGNDFETESLPGALPQGQ) is disordered. Catalysis depends on His306, which acts as the Proton acceptor. The Fe cation site is built by His349 and Glu355. Homogentisate is bound by residues Tyr364 and His385. Residue His385 participates in Fe cation binding.

This sequence belongs to the homogentisate dioxygenase family. As to quaternary structure, hexamer; dimer of trimers. Fe cation serves as cofactor.

The enzyme catalyses homogentisate + O2 = 4-maleylacetoacetate + H(+). It functions in the pathway amino-acid degradation; L-phenylalanine degradation; acetoacetate and fumarate from L-phenylalanine: step 4/6. In terms of biological role, involved in the catabolism of homogentisate (2,5-dihydroxyphenylacetate or 2,5-OH-PhAc), a central intermediate in the degradation of phenylalanine and tyrosine. Catalyzes the oxidative ring cleavage of the aromatic ring of homogentisate to yield maleylacetoacetate. This chain is Homogentisate 1,2-dioxygenase, found in Rhizobium meliloti (strain 1021) (Ensifer meliloti).